We begin with the raw amino-acid sequence, 164 residues long: MRVGVYPGSFDPITKGHLDLIERAASKFDKVIVAVLININKKGMFSIEERVNLIEKCVAKYNNVEVKSFNGLLIDFVRKEKADVIIKGLRSVTDFEYEFQMALMNRELANEVETVFMVTSPNYSYISSSAIKQVASFNGEIKNFVPKEIVEDLEERISSLRGEG.

Position 9 (serine 9) interacts with substrate. ATP contacts are provided by residues 9–10 (SF) and histidine 17. 3 residues coordinate substrate: lysine 41, leucine 73, and lysine 87. ATP contacts are provided by residues 88–90 (GLR), glutamate 98, and 123–129 (YSYISSS).

It belongs to the bacterial CoaD family. As to quaternary structure, homohexamer. The cofactor is Mg(2+).

The protein localises to the cytoplasm. The enzyme catalyses (R)-4'-phosphopantetheine + ATP + H(+) = 3'-dephospho-CoA + diphosphate. It participates in cofactor biosynthesis; coenzyme A biosynthesis; CoA from (R)-pantothenate: step 4/5. In terms of biological role, reversibly transfers an adenylyl group from ATP to 4'-phosphopantetheine, yielding dephospho-CoA (dPCoA) and pyrophosphate. In Clostridium perfringens (strain ATCC 13124 / DSM 756 / JCM 1290 / NCIMB 6125 / NCTC 8237 / Type A), this protein is Phosphopantetheine adenylyltransferase.